Reading from the N-terminus, the 125-residue chain is Small ribosomal subunit protein uS13 (125 aa).

Positions R92–K125 are disordered. Over residues R107–K125 the composition is skewed to basic residues.

This sequence belongs to the universal ribosomal protein uS13 family. As to quaternary structure, part of the 30S ribosomal subunit. Forms a loose heterodimer with protein S19. Forms two bridges to the 50S subunit in the 70S ribosome.

Functionally, located at the top of the head of the 30S subunit, it contacts several helices of the 16S rRNA. In the 70S ribosome it contacts the 23S rRNA (bridge B1a) and protein L5 of the 50S subunit (bridge B1b), connecting the 2 subunits; these bridges are implicated in subunit movement. Contacts the tRNAs in the A and P-sites. The chain is Small ribosomal subunit protein uS13 from Chlorobium phaeobacteroides (strain DSM 266 / SMG 266 / 2430).